The following is a 406-amino-acid chain: Lysosome-associated membrane glycoprotein 1 (406 aa).

Positions 1–24 (MAAPGARRPLLLLLLAGLAHGASA) are cleaved as a signal peptide. A first lumenal domain region spans residues 25-188 (LFEVKNNGTT…SKEETHCTQD (164 aa)). Residues 25–370 (LFEVKNNGTT…VEECVQDGNN (346 aa)) are Lumenal-facing. Asn31, Asn52, Asn58, Asn70, Asn78, Asn97, Asn101, Asn115, Asn159, and Asn177 each carry an N-linked (GlcNAc...) asparagine glycan. A disulfide bridge links Cys35 with Cys74. A disulfide bridge links Cys149 with Cys185. The disordered stretch occupies residues 180-207 (KEETHCTQDGPSPTTGPPSPSPPLVPTN). The segment at 189 to 218 (GPSPTTGPPSPSPPLVPTNPTVSKYNVTGN) is hinge. The segment covering 193–205 (TTGPPSPSPPLVP) has biased composition (pro residues). N-linked (GlcNAc...) asparagine glycans are attached at residues Asn214, Asn219, Asn232, and Asn240. The interval 219-370 (NGTCLLASMA…VEECVQDGNN (152 aa)) is second lumenal domain. Cys222 and Cys259 form a disulfide bridge. N-linked (GlcNAc...) (high mannose) asparagine glycosylation is present at Asn252. Asn282, Asn296, and Asn311 each carry an N-linked (GlcNAc...) asparagine glycan. A disulfide bridge links Cys327 with Cys364. Residues 371–394 (MLIPIAVGGALAGLVLIVLIAYLI) form a helical membrane-spanning segment. The Cytoplasmic portion of the chain corresponds to 395–406 (GRKRSHAGYQTI).

It belongs to the LAMP family. Interacts with ABCB9; this interaction strongly stabilizes ABCB9 and protects ABCB9 against lysosomal degradation. Interacts with FURIN. Interacts with TMEM175; inhibiting the proton channel activity of TMEM175. Post-translationally, O- and N-glycosylated; some of the N-glycans attached to LAMP-1 are polylactosaminoglycans.

The protein resides in the lysosome membrane. It is found in the endosome membrane. Its subcellular location is the late endosome membrane. It localises to the cell membrane. The protein localises to the cytolytic granule membrane. Its function is as follows. Lysosomal membrane glycoprotein which plays an important role in lysosome biogenesis, lysosomal pH regulation, autophagy and cholesterol homeostasis. Acts as an important regulator of lysosomal lumen pH regulation by acting as a direct inhibitor of the proton channel TMEM175, facilitating lysosomal acidification for optimal hydrolase activity. Also plays an important role in NK-cells cytotoxicity. Mechanistically, participates in cytotoxic granule movement to the cell surface and perforin trafficking to the lytic granule. In addition, protects NK-cells from degranulation-associated damage induced by their own cytotoxic granule content. Presents carbohydrate ligands to selectins. Also implicated in tumor cell metastasis. This chain is Lysosome-associated membrane glycoprotein 1 (Lamp1), found in Mus musculus (Mouse).